The following is an 89-amino-acid chain: Putative regulatory protein BPUM_1466 (89 aa).

The protein belongs to the RemA family.

This chain is Putative regulatory protein BPUM_1466, found in Bacillus pumilus (strain SAFR-032).